Consider the following 673-residue polypeptide: tRNA uridine 5-carboxymethylaminomethyl modification enzyme MnmG (673 aa).

17–22 (GGGHAG) contacts FAD. Residue 284-298 (GPRYCPSVEDKINRF) coordinates NAD(+).

Belongs to the MnmG family. As to quaternary structure, homodimer. Heterotetramer of two MnmE and two MnmG subunits. It depends on FAD as a cofactor.

It localises to the cytoplasm. In terms of biological role, NAD-binding protein involved in the addition of a carboxymethylaminomethyl (cmnm) group at the wobble position (U34) of certain tRNAs, forming tRNA-cmnm(5)s(2)U34. The sequence is that of tRNA uridine 5-carboxymethylaminomethyl modification enzyme MnmG from Polaromonas sp. (strain JS666 / ATCC BAA-500).